The chain runs to 603 residues: Probable methyltransferase-like protein 25 (603 aa).

Residues 326 to 352 (TSSQQIPNRETSEANKERRKMTSKSSE) form a disordered region.

In terms of biological role, probable methyltransferase. This is Probable methyltransferase-like protein 25 (METTL25) from Homo sapiens (Human).